A 154-amino-acid chain; its full sequence is uncharacterized protein (154 aa).

This is an uncharacterized protein from Saccharomyces cerevisiae (strain ATCC 204508 / S288c) (Baker's yeast).